A 310-amino-acid chain; its full sequence is Probable RuBisCO transcriptional regulator (310 aa).

Positions 6 to 63 (FTLDQLRILKAIASEGSFKKAAESLYISQPAVSLQIQNLEKQLNIPIFDRANRKAVFT) constitute an HTH lysR-type domain. A DNA-binding region (H-T-H motif) is located at residues 23 to 42 (FKKAAESLYISQPAVSLQIQ).

This sequence belongs to the LysR transcriptional regulatory family.

It is found in the plastid. Its subcellular location is the chloroplast. Trans-acting transcriptional regulator of RuBisCO genes (rbcL and rbcS) expression. This chain is Probable RuBisCO transcriptional regulator (rbcR), found in Guillardia theta (Cryptophyte).